The chain runs to 447 residues: Cysteine--tRNA ligase (447 aa).

A Zn(2+)-binding site is contributed by C28. The short motif at 30–40 is the 'HIGH' region element; sequence PTVYNYIHVGN. Zn(2+) contacts are provided by C211, H236, and E240. The 'KMSKS' region signature appears at 268–272; that stretch reads KMSKS. ATP is bound at residue K271.

The protein belongs to the class-I aminoacyl-tRNA synthetase family. As to quaternary structure, monomer. It depends on Zn(2+) as a cofactor.

It localises to the cytoplasm. The enzyme catalyses tRNA(Cys) + L-cysteine + ATP = L-cysteinyl-tRNA(Cys) + AMP + diphosphate. The chain is Cysteine--tRNA ligase from Streptococcus mutans serotype c (strain ATCC 700610 / UA159).